The primary structure comprises 1515 residues: Glutamate synthase [NADPH] large chain (1515 aa).

Residues 1–36 constitute a propeptide that is removed on maturation; that stretch reads MTTELNQGEQFVADFRANAAALTTANAYNPEDEHDA. Cysteine 37 functions as the For GATase activity in the catalytic mechanism. One can recognise a Glutamine amidotransferase type-2 domain in the interval 37–432; that stretch reads CGVGFIAAID…PGEMIAVDLQ (396 aa). The disordered stretch occupies residues 916 to 937; that stretch reads AKSDSGEGGEDPARFRPDKNGD. Over residues 926–936 the composition is skewed to basic and acidic residues; it reads DPARFRPDKNG. Residues 1085-1142 and 1086-1142 contribute to the FMN site; these read LSEV…IMVR and SEVH…IMVR. Positions 1138, 1144, and 1149 each coordinate [3Fe-4S] cluster.

It belongs to the glutamate synthase family. As to quaternary structure, aggregate of 4 catalytic active heterodimers, consisting of a large and a small subunit. It depends on [3Fe-4S] cluster as a cofactor. FAD is required as a cofactor. Requires FMN as cofactor.

It carries out the reaction 2 L-glutamate + NADP(+) = L-glutamine + 2-oxoglutarate + NADPH + H(+). Its pathway is amino-acid biosynthesis; L-glutamate biosynthesis via GLT pathway; L-glutamate from 2-oxoglutarate and L-glutamine (NADP(+) route): step 1/1. It participates in energy metabolism; nitrogen metabolism. The protein is Glutamate synthase [NADPH] large chain (gltB) of Azospirillum brasilense.